The chain runs to 153 residues: Holo-[acyl-carrier-protein] synthase (153 aa).

2 residues coordinate Mg(2+): aspartate 24 and glutamate 78.

Belongs to the P-Pant transferase superfamily. AcpS family. The cofactor is Mg(2+).

It localises to the cytoplasm. The catalysed reaction is apo-[ACP] + CoA = holo-[ACP] + adenosine 3',5'-bisphosphate + H(+). Its function is as follows. Transfers the 4'-phosphopantetheine moiety from coenzyme A to a Ser of acyl-carrier-protein. This is Holo-[acyl-carrier-protein] synthase from Bordetella pertussis (strain Tohama I / ATCC BAA-589 / NCTC 13251).